A 635-amino-acid chain; its full sequence is Replication factor C small subunit (635 aa).

51 to 58 (GPPGTGKT) is a binding site for ATP.

The protein belongs to the activator 1 small subunits family. RfcS subfamily. In terms of assembly, heteromultimer composed of small subunits (RfcS) and large subunits (RfcL). This protein undergoes a protein self splicing that involves a post-translational excision of the intervening region (intein) followed by peptide ligation.

Part of the RFC clamp loader complex which loads the PCNA sliding clamp onto DNA. The sequence is that of Replication factor C small subunit (rfcS) from Methanopyrus kandleri (strain AV19 / DSM 6324 / JCM 9639 / NBRC 100938).